The chain runs to 93 residues: UPF0147 protein PF0239 (93 aa).

This sequence belongs to the UPF0147 family.

This chain is UPF0147 protein PF0239, found in Pyrococcus furiosus (strain ATCC 43587 / DSM 3638 / JCM 8422 / Vc1).